A 429-amino-acid polypeptide reads, in one-letter code: Histidine--tRNA ligase (429 aa).

Belongs to the class-II aminoacyl-tRNA synthetase family. As to quaternary structure, homodimer.

The protein localises to the cytoplasm. The catalysed reaction is tRNA(His) + L-histidine + ATP = L-histidyl-tRNA(His) + AMP + diphosphate + H(+). This is Histidine--tRNA ligase from Cyanothece sp. (strain PCC 7425 / ATCC 29141).